A 158-amino-acid polypeptide reads, in one-letter code: NAD(P)H-quinone oxidoreductase subunit J, chloroplastic (158 aa).

Belongs to the complex I 30 kDa subunit family. As to quaternary structure, NDH is composed of at least 16 different subunits, 5 of which are encoded in the nucleus.

The protein resides in the plastid. The protein localises to the chloroplast thylakoid membrane. The catalysed reaction is a plastoquinone + NADH + (n+1) H(+)(in) = a plastoquinol + NAD(+) + n H(+)(out). It catalyses the reaction a plastoquinone + NADPH + (n+1) H(+)(in) = a plastoquinol + NADP(+) + n H(+)(out). In terms of biological role, NDH shuttles electrons from NAD(P)H:plastoquinone, via FMN and iron-sulfur (Fe-S) centers, to quinones in the photosynthetic chain and possibly in a chloroplast respiratory chain. The immediate electron acceptor for the enzyme in this species is believed to be plastoquinone. Couples the redox reaction to proton translocation, and thus conserves the redox energy in a proton gradient. This Solanum lycopersicum (Tomato) protein is NAD(P)H-quinone oxidoreductase subunit J, chloroplastic.